Here is a 239-residue protein sequence, read N- to C-terminus: Tetrahydromethanopterin S-methyltransferase subunit A (239 aa).

Residues 1-215 lie on the Cytoplasmic side of the membrane; it reads MADKKAPAAG…EAAMIAKFNS (215 aa). Histidine 85 serves as a coordination point for 5-hydroxybenzimidazolylcob(I)amide. Residues 216–238 traverse the membrane as a helical segment; that stretch reads GYYNGKIQGIAIGLFLSIVIFSL. Residue leucine 239 is a topological domain, extracellular.

Belongs to the MtrA family. The complex is composed of 8 subunits; MtrA, MtrB, MtrC, MtrD, MtrE, MtrF, MtrG and MtrH. The cofactor is 5-hydroxybenzimidazolylcob(I)amide.

It localises to the cell membrane. The catalysed reaction is 5-methyl-5,6,7,8-tetrahydromethanopterin + coenzyme M + 2 Na(+)(in) = 5,6,7,8-tetrahydromethanopterin + methyl-coenzyme M + 2 Na(+)(out). It functions in the pathway one-carbon metabolism; methanogenesis from CO(2); methyl-coenzyme M from 5,10-methylene-5,6,7,8-tetrahydromethanopterin: step 2/2. Its function is as follows. Part of a complex that catalyzes the formation of methyl-coenzyme M and tetrahydromethanopterin from coenzyme M and methyl-tetrahydromethanopterin. This is an energy-conserving, sodium-ion translocating step. The chain is Tetrahydromethanopterin S-methyltransferase subunit A from Methanococcus maripaludis (strain DSM 14266 / JCM 13030 / NBRC 101832 / S2 / LL).